Reading from the N-terminus, the 59-residue chain is Membrane-associated ATPase epsilon chain (59 aa).

It to E.hirae NtpH. Sul-ATPase is composed of six (or maybe five) subunits: alpha, beta, delta, gamma, C (proteolipid), and possibly epsilon.

It catalyses the reaction ATP + H2O + 4 H(+)(in) = ADP + phosphate + 5 H(+)(out). This is Membrane-associated ATPase epsilon chain (atpE) from Sulfurisphaera tokodaii (strain DSM 16993 / JCM 10545 / NBRC 100140 / 7) (Sulfolobus tokodaii).